A 96-amino-acid chain; its full sequence is Aspartyl/glutamyl-tRNA(Asn/Gln) amidotransferase subunit C (96 aa).

This sequence belongs to the GatC family. Heterotrimer of A, B and C subunits.

The enzyme catalyses L-glutamyl-tRNA(Gln) + L-glutamine + ATP + H2O = L-glutaminyl-tRNA(Gln) + L-glutamate + ADP + phosphate + H(+). It carries out the reaction L-aspartyl-tRNA(Asn) + L-glutamine + ATP + H2O = L-asparaginyl-tRNA(Asn) + L-glutamate + ADP + phosphate + 2 H(+). Its function is as follows. Allows the formation of correctly charged Asn-tRNA(Asn) or Gln-tRNA(Gln) through the transamidation of misacylated Asp-tRNA(Asn) or Glu-tRNA(Gln) in organisms which lack either or both of asparaginyl-tRNA or glutaminyl-tRNA synthetases. The reaction takes place in the presence of glutamine and ATP through an activated phospho-Asp-tRNA(Asn) or phospho-Glu-tRNA(Gln). The sequence is that of Aspartyl/glutamyl-tRNA(Asn/Gln) amidotransferase subunit C from Exiguobacterium sp. (strain ATCC BAA-1283 / AT1b).